The following is a 232-amino-acid chain: Large ribosomal subunit protein uL1 (232 aa).

This sequence belongs to the universal ribosomal protein uL1 family. In terms of assembly, part of the 50S ribosomal subunit.

Functionally, binds directly to 23S rRNA. The L1 stalk is quite mobile in the ribosome, and is involved in E site tRNA release. Its function is as follows. Protein L1 is also a translational repressor protein, it controls the translation of the L11 operon by binding to its mRNA. The protein is Large ribosomal subunit protein uL1 of Aliarcobacter butzleri (strain RM4018) (Arcobacter butzleri).